Reading from the N-terminus, the 100-residue chain is uncharacterized protein (100 aa).

It belongs to the mulikevirus gp14 protein family.

The protein localises to the host cytoplasm. This is an uncharacterized protein from Enterobacteriaceae (Bacteriophage Mu).